Reading from the N-terminus, the 381-residue chain is Phospholipid scramblase family protein C343.06c (381 aa).

The tract at residues 336–369 is disordered; that stretch reads QEILKNDQETTPSTNDSSSETKSPFLSDADLDQQ. The segment covering 344–359 has biased composition (polar residues); it reads ETTPSTNDSSSETKSP.

Belongs to the phospholipid scramblase family.

The protein localises to the mitochondrion. The chain is Phospholipid scramblase family protein C343.06c from Schizosaccharomyces pombe (strain 972 / ATCC 24843) (Fission yeast).